The primary structure comprises 239 residues: Norbelladine 4'-O-methyltransferase (239 aa).

S-adenosyl-L-methionine contacts are provided by residues V55, E77, 79-80 (GV), S85, D103, and A132. D155 contacts a divalent metal cation. D157 is a binding site for S-adenosyl-L-methionine. Positions 181 and 182 each coordinate a divalent metal cation.

The protein belongs to the class I-like SAM-binding methyltransferase superfamily. Cation-dependent O-methyltransferase family. The cofactor is Mg(2+). In terms of tissue distribution, mostly expressed in bulbs, and, to a lower extent, in stems and roots.

The enzyme catalyses norbelladine + S-adenosyl-L-methionine = 4'-O-methylnorbelladine + S-adenosyl-L-homocysteine + H(+). It participates in alkaloid biosynthesis. Functionally, 4'-O-methyltransferase converting norbelladine to 4'-O-methylnorbelladine. 4'-O-methylnorbelladine is a precursor to all Amaryllidaceae alkaloids such as galanthamine, lycorine and haemanthamine, and including haemanthamine- and crinamine-type alkaloids, promising anticancer agents. The sequence is that of Norbelladine 4'-O-methyltransferase from Narcissus pseudonarcissus (Daffodil).